The sequence spans 323 residues: Annexin A3 (323 aa).

Residue alanine 2 is modified to N-acetylalanine. 4 Annexin repeats span residues 18 to 89 (FSPS…ALVT), 90 to 161 (PPAV…TLAD), 173 to 245 (HLAK…AIVN), and 249 to 320 (NTPA…KICG). Threonine 267 is subject to Phosphothreonine.

Belongs to the annexin family.

In terms of biological role, inhibitor of phospholipase A2, also possesses anti-coagulant properties. Also cleaves the cyclic bond of inositol 1,2-cyclic phosphate to form inositol 1-phosphate. The polypeptide is Annexin A3 (ANXA3) (Homo sapiens (Human)).